Consider the following 252-residue polypeptide: 2-succinyl-6-hydroxy-2,4-cyclohexadiene-1-carboxylate synthase (252 aa).

Belongs to the AB hydrolase superfamily. MenH family. In terms of assembly, monomer.

It catalyses the reaction 5-enolpyruvoyl-6-hydroxy-2-succinyl-cyclohex-3-ene-1-carboxylate = (1R,6R)-6-hydroxy-2-succinyl-cyclohexa-2,4-diene-1-carboxylate + pyruvate. It functions in the pathway quinol/quinone metabolism; 1,4-dihydroxy-2-naphthoate biosynthesis; 1,4-dihydroxy-2-naphthoate from chorismate: step 3/7. The protein operates within quinol/quinone metabolism; menaquinone biosynthesis. Functionally, catalyzes a proton abstraction reaction that results in 2,5-elimination of pyruvate from 2-succinyl-5-enolpyruvyl-6-hydroxy-3-cyclohexene-1-carboxylate (SEPHCHC) and the formation of 2-succinyl-6-hydroxy-2,4-cyclohexadiene-1-carboxylate (SHCHC). The polypeptide is 2-succinyl-6-hydroxy-2,4-cyclohexadiene-1-carboxylate synthase (Escherichia coli O8 (strain IAI1)).